We begin with the raw amino-acid sequence, 880 residues long: Protein transport protein SEC23 A (880 aa).

Polar residues predominate over residues Met-1–Gly-13. Residues Met-1–Pro-95 form a disordered region. Positions Pro-20–Pro-36 are enriched in pro residues. Low complexity predominate over residues Met-57 to Pro-70. Cys-204, Cys-207, Cys-226, and Cys-229 together coordinate Zn(2+). Residues Cys-204–Cys-229 form a zinc finger-like region.

It belongs to the SEC23/SEC24 family. SEC24 subfamily. As to quaternary structure, component of the coat protein complex II (COPII), composed of at least five proteins: the Sec23/24 complex, the Sec13/31 complex and Sar1. In terms of tissue distribution, mostly expressed in seedlings, roots, cotyledons, leaves, trichomes, leaf primordia and flowers, and, to a lower extent, in mature siliques.

The protein localises to the cytoplasmic vesicle. It is found in the COPII-coated vesicle membrane. It localises to the endoplasmic reticulum membrane. Its subcellular location is the membrane. Its function is as follows. Component of the coat protein complex II (COPII) which promotes the formation of transport vesicles from the endoplasmic reticulum (ER). The coat has two main functions, the physical deformation of the endoplasmic reticulum membrane into vesicles and the selection of cargo molecules. May contribute to COPII-coated vesicles formation and ER-Golgi vesicle transport. Together with SEC23D, essential for pollen wall development and exine patterning, probably by regulating endoplasmic reticulum (ER) export of lipids and proteins (e.g. sporopollenin) necessary for pollen wall formation. Also involved in plastid physiology in anther tapetal cells. The chain is Protein transport protein SEC23 A from Arabidopsis thaliana (Mouse-ear cress).